Here is a 416-residue protein sequence, read N- to C-terminus: Imidazolonepropionase (416 aa).

Fe(3+) contacts are provided by His81 and His83. Residues His81 and His83 each contribute to the Zn(2+) site. 3 residues coordinate 4-imidazolone-5-propanoate: Arg90, Tyr153, and His186. Tyr153 is a binding site for N-formimidoyl-L-glutamate. His251 is a binding site for Fe(3+). Residue His251 coordinates Zn(2+). Gln254 provides a ligand contact to 4-imidazolone-5-propanoate. Fe(3+) is bound at residue Asp326. Asp326 serves as a coordination point for Zn(2+). N-formimidoyl-L-glutamate-binding residues include Asn328 and Gly330. 4-imidazolone-5-propanoate is bound at residue Thr331.

Belongs to the metallo-dependent hydrolases superfamily. HutI family. Zn(2+) serves as cofactor. It depends on Fe(3+) as a cofactor.

The protein resides in the cytoplasm. It carries out the reaction 4-imidazolone-5-propanoate + H2O = N-formimidoyl-L-glutamate. It participates in amino-acid degradation; L-histidine degradation into L-glutamate; N-formimidoyl-L-glutamate from L-histidine: step 3/3. Functionally, catalyzes the hydrolytic cleavage of the carbon-nitrogen bond in imidazolone-5-propanoate to yield N-formimidoyl-L-glutamate. It is the third step in the universal histidine degradation pathway. The protein is Imidazolonepropionase of Paracidovorax citrulli (strain AAC00-1) (Acidovorax citrulli).